We begin with the raw amino-acid sequence, 71 residues long: uncharacterized protein (71 aa).

Residues 44–66 (LFFLVFRRLFSWFLVLLPSPRFF) traverse the membrane as a helical segment.

It localises to the membrane. This is an uncharacterized protein from Saccharomyces cerevisiae (strain ATCC 204508 / S288c) (Baker's yeast).